The sequence spans 218 residues: MYLFHLCLVFACVPCPTVQASKLCLGWLWGMDIDPYKEFGSSYQLLNFLPLDFFPDLNALVDTATALYEEELTGREHCSPHHTAIRQALVCWDELTKLIAWMSSNITSEQVRTIIVNHVNDTWGLKVRQSLWFHLSCLTFGQHTVQEFLVSFGVWIRTPAPYRPPNAPILSTLPEHTVIRRRGGARASRSPRRRTPSPRRRRSQSPRRRRSQSPSANC.

Residues M1 to A20 form the signal peptide. An HBEAG region spans residues G26–L28. Over residues R180 to S211 the composition is skewed to basic residues. The disordered stretch occupies residues R180–C218. The stretch at S190–P196 is one 1; half-length repeat. The 3 X 8 AA repeats of S-P-R-R-R-R-S-Q stretch occupies residues S190–Q212. Residues S190–C218 constitute a propeptide that is removed on maturation. A run of 2 repeats spans residues S197–Q204 and S205–Q212.

It belongs to the orthohepadnavirus precore antigen family. Homodimerizes. Phosphorylated. Post-translationally, cleaved by host furin.

The protein resides in the secreted. Its subcellular location is the host nucleus. Its function is as follows. May regulate immune response to the intracellular capsid in acting as a T-cell tolerogen, by having an immunoregulatory effect which prevents destruction of infected cells by cytotoxic T-cells. This immune regulation may predispose to chronicity during perinatal infections and prevent severe liver injury during adult infections. The protein is External core antigen of Woodchuck hepatitis B virus (isolate 1) (WHV).